A 250-amino-acid chain; its full sequence is Cell division protein ZapD (250 aa).

The protein belongs to the ZapD family. As to quaternary structure, interacts with FtsZ.

It localises to the cytoplasm. Cell division factor that enhances FtsZ-ring assembly. Directly interacts with FtsZ and promotes bundling of FtsZ protofilaments, with a reduction in FtsZ GTPase activity. In Pectobacterium atrosepticum (strain SCRI 1043 / ATCC BAA-672) (Erwinia carotovora subsp. atroseptica), this protein is Cell division protein ZapD.